A 352-amino-acid chain; its full sequence is MTIAVGRAPAERGWFDVLDDWLKRDRFVFVGWSGLLLFPCAYLALGGWLTGTSFVTSWYTHGIASSYLEGGNFLTVAVSTPADAFGHSLMLLWGPEAQGNFVRWCQLGGLWNFVALHGAFGLIGFMLRQFEIARLVGVRPYNAIAFSGPIAVFVSVFLMYPLGQSSWFFAPSFGVAAIFRFLLFLQGFHNWTLNPFHMMGVAGILGGALLCAIHGATVENTLFEDSEQSNTFRAFEPTQAEETYSMVTANRFWSQIFGIAFSNKRWLHFFMLFVPVTGLWMSSIGIVGLALNLRAYDFVSQELRAAEDPEFETFYTKNILLNEGIRAWMAPQDQPHEKFVFPEEVLPRGNAL.

A helical transmembrane segment spans residues 40-60 (CAYLALGGWLTGTSFVTSWYT). His-117 contacts chlorophyll a. Residues 124-140 (GFMLRQFEIARLVGVRP) form a helical membrane-spanning segment. The pheophytin a site is built by Gln-129 and Asn-142. Residues 152-165 (VFVSVFLMYPLGQS) traverse the membrane as a helical segment. His-197 is a binding site for chlorophyll a. Residues 207 to 227 (GALLCAIHGATVENTLFEDSE) traverse the membrane as a helical segment. A plastoquinone-binding residues include His-214 and Phe-261. Residue His-214 participates in Fe cation binding. His-268 is a Fe cation binding site. Residues 278-294 (GLWMSSIGIVGLALNLR) form a helical membrane-spanning segment.

Belongs to the reaction center PufL/M/PsbA/D family. As to quaternary structure, PSII is composed of 1 copy each of membrane proteins PsbA, PsbB, PsbC, PsbD, PsbE, PsbF, PsbH, PsbI, PsbJ, PsbK, PsbL, PsbM, PsbT, PsbX, PsbY, PsbZ, Psb30/Ycf12, peripheral proteins PsbO, CyanoQ (PsbQ), PsbU, PsbV and a large number of cofactors. It forms dimeric complexes. The D1/D2 heterodimer binds P680, chlorophylls that are the primary electron donor of PSII, and subsequent electron acceptors. It shares a non-heme iron and each subunit binds pheophytin, quinone, additional chlorophylls, carotenoids and lipids. There is also a Cl(-1) ion associated with D1 and D2, which is required for oxygen evolution. The PSII complex binds additional chlorophylls, carotenoids and specific lipids. is required as a cofactor.

The protein resides in the cellular thylakoid membrane. It catalyses the reaction 2 a plastoquinone + 4 hnu + 2 H2O = 2 a plastoquinol + O2. Its function is as follows. Photosystem II (PSII) is a light-driven water:plastoquinone oxidoreductase that uses light energy to abstract electrons from H(2)O, generating O(2) and a proton gradient subsequently used for ATP formation. It consists of a core antenna complex that captures photons, and an electron transfer chain that converts photonic excitation into a charge separation. The D1/D2 (PsbA/PsbD) reaction center heterodimer binds P680, the primary electron donor of PSII as well as several subsequent electron acceptors. D2 is needed for assembly of a stable PSII complex. The sequence is that of Photosystem II D2 protein from Synechococcus elongatus (strain ATCC 33912 / PCC 7942 / FACHB-805) (Anacystis nidulans R2).